A 332-amino-acid polypeptide reads, in one-letter code: tRNA-dihydrouridine(20/20a) synthase (332 aa).

Residues P19–L21 and Q71 each bind FMN. Residue C101 is the Proton donor of the active site. FMN is bound by residues K140, H173, N213–G215, and G235–R236.

This sequence belongs to the Dus family. DusA subfamily. The cofactor is FMN.

The enzyme catalyses 5,6-dihydrouridine(20) in tRNA + NADP(+) = uridine(20) in tRNA + NADPH + H(+). The catalysed reaction is 5,6-dihydrouridine(20) in tRNA + NAD(+) = uridine(20) in tRNA + NADH + H(+). It carries out the reaction 5,6-dihydrouridine(20a) in tRNA + NADP(+) = uridine(20a) in tRNA + NADPH + H(+). It catalyses the reaction 5,6-dihydrouridine(20a) in tRNA + NAD(+) = uridine(20a) in tRNA + NADH + H(+). Catalyzes the synthesis of 5,6-dihydrouridine (D), a modified base found in the D-loop of most tRNAs, via the reduction of the C5-C6 double bond in target uridines. Specifically modifies U20 and U20a in tRNAs. The sequence is that of tRNA-dihydrouridine(20/20a) synthase from Salmonella typhi.